Here is a 469-residue protein sequence, read N- to C-terminus: MGTVHARSLEPLPASGPDFGALGEEAEFVEVEPEAKQEILENKDVVVQHVHFDGLGRTKDDIIMYEIRDVFKAKNLIEVMRKSHEAREKLLRLGIFRQVDVLIDTCQGDDALPNGLDVTFEVTELRRLTGSYNTMVGNNEGSMVLGLKLPNLLGRAEKVTFQFSYGTKETSYGLSFFKPQPGNFDRNFSVNLYKVTGQFPWSSLRETDRGVSAEYSFPTWKTSHTVKWEGVWRELGCLSRVASFAVRKESGHSLKSSLSHSMVIDSRNSSILPKRGALLKVNQELAGYTGGDVSFLKEDFELQLNKQLILDTVFSASLWGGMLVPMGDKPSSIADRFYLGGPTSVRGFSMHSVGPQSEGDYLGGEAYWAGGLHLYTPLPFRPGQGGFGELFRTHFFLNAGNLCNLNYGEGPKAHIRKLAECIRWSYGAGIVLRLGNIARLELNYCVPMGVQRGDRICDGVQFGAGIRFL.

Residues 45–125 (VVVQHVHFDG…LDVTFEVTEL (81 aa)) enclose the POTRA domain. Lysine 255 is subject to N6-methyllysine.

This sequence belongs to the SAM50/omp85 family. Associates with the mitochondrial contact site and cristae organizing system (MICOS) complex, composed of at least MICOS10/MIC10, CHCHD3/MIC19, CHCHD6/MIC25, APOOL/MIC27, IMMT/MIC60, APOO/MIC23/MIC26 and QIL1/MIC13. This complex was also known under the names MINOS or MitOS complex. The MICOS complex associates with mitochondrial outer membrane proteins SAMM50, MTX1 and MTX2 (together described as components of the mitochondrial outer membrane sorting assembly machinery (SAM) complex) and DNAJC11, mitochondrial inner membrane protein TMEM11 and with HSPA9. The MICOS and SAM complexes together with DNAJC11 are part of a large protein complex spanning both membranes termed the mitochondrial intermembrane space bridging (MIB) complex. Interacts with IMMT/MIC60. Interacts with CHCHD3/MIC19. Interacts with ARMC1.

It is found in the mitochondrion outer membrane. The protein resides in the cytoplasm. The protein localises to the mitochondrion. In terms of biological role, plays a crucial role in the maintenance of the structure of mitochondrial cristae and the proper assembly of the mitochondrial respiratory chain complexes. Required for the assembly of TOMM40 into the TOM complex. The chain is Sorting and assembly machinery component 50 homolog (SAMM50) from Bos taurus (Bovine).